The sequence spans 90 residues: U7-theraphotoxin-Hhn1a 4 (90 aa).

An N-terminal signal peptide occupies residues 1–19; that stretch reads MKTAIFTVVLALAVFAVLS. A propeptide spanning residues 20–50 is cleaved from the precursor; sequence FGWEANEEALSEEFTELIHEKEAASETEARE. 3 disulfide bridges follow: cysteine 51-cysteine 65, cysteine 58-cysteine 70, and cysteine 64-cysteine 81.

The protein belongs to the neurotoxin 10 (Hwtx-1) family. 13 (Hntx-13) subfamily. As to expression, expressed by the venom gland.

The protein localises to the secreted. Its function is as follows. Ion channel inhibitor. The polypeptide is U7-theraphotoxin-Hhn1a 4 (Cyriopagopus hainanus (Chinese bird spider)).